The sequence spans 384 residues: Glycerol 3-phosphate oxidase (384 aa).

Residues 1-15 (METRDVLIVGGGVIG) form the signal peptide. Isoleucine 14 contributes to the FAD binding site. Residue cysteine 16 is the site of N-palmitoyl cysteine attachment. Cysteine 16 carries S-diacylglycerol cysteine lipidation. FAD is bound by residues glutamate 33, 42-43 (TS), and 47-49 (SGV). Serine 47 and histidine 51 together coordinate sn-glycerol 3-phosphate. Residue histidine 51 is the Proton acceptor of the active site. Residue valine 177 coordinates FAD. Residues lysine 258 and arginine 320 each coordinate sn-glycerol 3-phosphate. Residue 346-347 (MK) coordinates FAD. Position 348 (serine 348) interacts with sn-glycerol 3-phosphate. FAD is bound at residue threonine 352.

As to quaternary structure, monomer. The cofactor is FAD.

The protein resides in the cytoplasm. The protein localises to the cell membrane. The enzyme catalyses sn-glycerol 3-phosphate + O2 = dihydroxyacetone phosphate + H2O2. The protein operates within polyol metabolism; glycerol degradation via glycerol kinase pathway; glycerone phosphate from sn-glycerol 3-phosphate (aerobic route): step 1/1. Its function is as follows. Catalyzes the oxidation of glycerol 3-phosphate to dihydroxyacetone phosphate (DHAP), with a reduction of O2 to H2O2. The formation of hydrogen peroxide by this enzyme is crucial for cytotoxic effects of M.pneumoniae on host cells. Is involved in the metabolism of glycerol and is essential for glycerol utilization; glycerol is one of the few carbon sources that can be utilized by M.pneumoniae for growth. To a lesser extent, is also able to use glyceraldehyde 3-phosphate (GAP), an intermediate in the glycolysis pathway, as a substrate (but the structure of the product has not been elucidated). Therefore, in the absence of glycerol, GAP may serve as a substrate in the GlpO reaction to supply H2O2 during mycoplasma infection. Does not show any dehydrogenase activity with NAD(+). This Mycoplasma pneumoniae (strain ATCC 29342 / M129 / Subtype 1) (Mycoplasmoides pneumoniae) protein is Glycerol 3-phosphate oxidase.